The sequence spans 525 residues: D-3-phosphoglycerate dehydrogenase (525 aa).

NAD(+) is bound by residues R148–I149, D168, T200, C227–R229, and D253. Residue R229 is part of the active site. E258 is an active-site residue. Catalysis depends on H276, which acts as the Proton donor. H276–A279 provides a ligand contact to NAD(+). The region spanning L452 to L524 is the ACT domain.

It belongs to the D-isomer specific 2-hydroxyacid dehydrogenase family.

It carries out the reaction (2R)-3-phosphoglycerate + NAD(+) = 3-phosphooxypyruvate + NADH + H(+). It catalyses the reaction (R)-2-hydroxyglutarate + NAD(+) = 2-oxoglutarate + NADH + H(+). It participates in amino-acid biosynthesis; L-serine biosynthesis; L-serine from 3-phospho-D-glycerate: step 1/3. With respect to regulation, in bacteria displays feedback inhibition by L-serine. Its function is as follows. Catalyzes the reversible oxidation of 3-phospho-D-glycerate to 3-phosphonooxypyruvate, the first step of the phosphorylated L-serine biosynthesis pathway. Also catalyzes the reversible oxidation of 2-hydroxyglutarate to 2-oxoglutarate. This Bacillus subtilis (strain 168) protein is D-3-phosphoglycerate dehydrogenase (serA).